We begin with the raw amino-acid sequence, 318 residues long: Mitochondrial coenzyme A transporter SLC25A42 (318 aa).

Solcar repeat units lie at residues 31-117, 129-214, and 224-312; these read RQVL…YKRI, LPPW…LKSL, and PYPF…MQIL. 6 helical membrane-spanning segments follow: residues 33–53, 89–109, 135–155, 186–206, 230–250, and 293–313; these read VLSS…AVAP, LWRG…IQFS, LLAG…LDLV, LYFG…LSFF, MVFG…LDVV, and LKGP…QILL.

It belongs to the mitochondrial carrier (TC 2.A.29) family.

The protein localises to the mitochondrion inner membrane. The enzyme catalyses ADP(out) + CoA(in) = ADP(in) + CoA(out). The catalysed reaction is 3'-dephospho-CoA(in) + ADP(out) = 3'-dephospho-CoA(out) + ADP(in). It catalyses the reaction adenosine 3',5'-bisphosphate(in) + ADP(out) = adenosine 3',5'-bisphosphate(out) + ADP(in). It carries out the reaction AMP(in) + ADP(out) = AMP(out) + ADP(in). The enzyme catalyses dADP(in) + ADP(out) = dADP(out) + ADP(in). The catalysed reaction is ADP(in) + ATP(out) = ADP(out) + ATP(in). Functionally, mitochondrial carrier mediating the transport of coenzyme A (CoA) in mitochondria in exchange for intramitochondrial (deoxy)adenine nucleotides and adenosine 3',5'-diphosphate. This is Mitochondrial coenzyme A transporter SLC25A42 (Slc25a42) from Mus musculus (Mouse).